The sequence spans 82 residues: Putative membrane protein insertion efficiency factor (82 aa).

The protein belongs to the UPF0161 family.

Its subcellular location is the cell inner membrane. Could be involved in insertion of integral membrane proteins into the membrane. This Rickettsia africae (strain ESF-5) protein is Putative membrane protein insertion efficiency factor.